Reading from the N-terminus, the 874-residue chain is Alanine--tRNA ligase (874 aa).

His563, His567, Cys665, and His669 together coordinate Zn(2+).

This sequence belongs to the class-II aminoacyl-tRNA synthetase family. Zn(2+) is required as a cofactor.

The protein resides in the cytoplasm. It catalyses the reaction tRNA(Ala) + L-alanine + ATP = L-alanyl-tRNA(Ala) + AMP + diphosphate. Catalyzes the attachment of alanine to tRNA(Ala) in a two-step reaction: alanine is first activated by ATP to form Ala-AMP and then transferred to the acceptor end of tRNA(Ala). Also edits incorrectly charged Ser-tRNA(Ala) and Gly-tRNA(Ala) via its editing domain. This Histophilus somni (strain 2336) (Haemophilus somnus) protein is Alanine--tRNA ligase.